The primary structure comprises 89 residues: Cell division protein ZapA (89 aa).

Belongs to the ZapA family. Type 2 subfamily. In terms of assembly, homodimer. Interacts with FtsZ.

Its subcellular location is the cytoplasm. Functionally, activator of cell division through the inhibition of FtsZ GTPase activity, therefore promoting FtsZ assembly into bundles of protofilaments necessary for the formation of the division Z ring. It is recruited early at mid-cell but it is not essential for cell division. This chain is Cell division protein ZapA, found in Bacillus thuringiensis (strain Al Hakam).